The following is a 305-amino-acid chain: NAD kinase (305 aa).

Asp88 serves as the catalytic Proton acceptor. NAD(+) is bound by residues 88-89 (DG), Arg93, 162-163 (NE), Lys173, Asn192, 203-208 (TAYSFS), and Gln262.

Belongs to the NAD kinase family. Requires a divalent metal cation as cofactor.

It localises to the cytoplasm. The enzyme catalyses NAD(+) + ATP = ADP + NADP(+) + H(+). Involved in the regulation of the intracellular balance of NAD and NADP, and is a key enzyme in the biosynthesis of NADP. Catalyzes specifically the phosphorylation on 2'-hydroxyl of the adenosine moiety of NAD to yield NADP. The polypeptide is NAD kinase (Tropheryma whipplei (strain TW08/27) (Whipple's bacillus)).